Consider the following 97-residue polypeptide: Co-chaperonin GroES (97 aa).

This sequence belongs to the GroES chaperonin family. As to quaternary structure, heptamer of 7 subunits arranged in a ring. Interacts with the chaperonin GroEL.

The protein resides in the cytoplasm. Together with the chaperonin GroEL, plays an essential role in assisting protein folding. The GroEL-GroES system forms a nano-cage that allows encapsulation of the non-native substrate proteins and provides a physical environment optimized to promote and accelerate protein folding. GroES binds to the apical surface of the GroEL ring, thereby capping the opening of the GroEL channel. This is Co-chaperonin GroES from Aeromonas salmonicida (strain A449).